A 90-amino-acid polypeptide reads, in one-letter code: MSFLNVFSSRPTPKQVAKDRLKVILIHDRGELSDEVLDKIRLEILDVLSKYVEIENEDVDITVTKSNPIEGESPSLVANIPIKNIKGKAR.

It belongs to the MinE family.

Its function is as follows. Prevents the cell division inhibition by proteins MinC and MinD at internal division sites while permitting inhibition at polar sites. This ensures cell division at the proper site by restricting the formation of a division septum at the midpoint of the long axis of the cell. This chain is Cell division topological specificity factor, found in Clostridium perfringens (strain ATCC 13124 / DSM 756 / JCM 1290 / NCIMB 6125 / NCTC 8237 / Type A).